The following is a 139-amino-acid chain: Large ribosomal subunit protein uL16 (139 aa).

It belongs to the universal ribosomal protein uL16 family. As to quaternary structure, part of the 50S ribosomal subunit.

Its function is as follows. Binds 23S rRNA and is also seen to make contacts with the A and possibly P site tRNAs. The sequence is that of Large ribosomal subunit protein uL16 from Koribacter versatilis (strain Ellin345).